We begin with the raw amino-acid sequence, 62 residues long: Large ribosomal subunit protein bL28 (62 aa).

Belongs to the bacterial ribosomal protein bL28 family.

The sequence is that of Large ribosomal subunit protein bL28 from Staphylococcus haemolyticus (strain JCSC1435).